Reading from the N-terminus, the 516-residue chain is Rho guanine nucleotide exchange factor 9 (516 aa).

An SH3 domain is found at 8–67 (DSIVSAEAVWDHVTMANRELAFKAGDVIKVLDASNKDWWWGQIDDEEGWFPASFVRLWVN). An interaction with GPHN region spans residues 100–110 (RDQMRANVINE). The DH domain occupies 103–287 (MRANVINEIM…RNVTQQINER (185 aa)). One can recognise a PH domain in the interval 318–425 (ELIYTGEMAW…WLRAFREERK (108 aa)). Positions 453 to 480 (PKQKGVNSARSVPPSYPPPQDPLNHGQY) are disordered. A Phosphoserine modification is found at Ser-502.

Interacts with GPHN. In terms of tissue distribution, detected in brain. Detected at low levels in heart.

It localises to the cytoplasm. Its subcellular location is the postsynaptic density. Its function is as follows. Acts as a guanine nucleotide exchange factor (GEF) for CDC42. Promotes formation of GPHN clusters. This is Rho guanine nucleotide exchange factor 9 (ARHGEF9) from Homo sapiens (Human).